Consider the following 793-residue polypeptide: Lon protease 1 (793 aa).

The 195-residue stretch at 8-202 folds into the Lon N-terminal domain; the sequence is VPVIPLKNSV…KLLDRLQELK (195 aa). An ATP-binding site is contributed by 354 to 361; the sequence is GPPGVGKT. One can recognise a Lon proteolytic domain in the interval 590-770; it reads LLPPGVVTGL…NEVLKITLGV (181 aa). Residues S676 and K719 contribute to the active site.

Belongs to the peptidase S16 family. Homohexamer. Organized in a ring with a central cavity.

Its subcellular location is the cytoplasm. It catalyses the reaction Hydrolysis of proteins in presence of ATP.. In terms of biological role, ATP-dependent serine protease that mediates the selective degradation of mutant and abnormal proteins as well as certain short-lived regulatory proteins. Required for cellular homeostasis and for survival from DNA damage and developmental changes induced by stress. Degrades polypeptides processively to yield small peptide fragments that are 5 to 10 amino acids long. Binds to DNA in a double-stranded, site-specific manner. In Bdellovibrio bacteriovorus (strain ATCC 15356 / DSM 50701 / NCIMB 9529 / HD100), this protein is Lon protease 1.